Reading from the N-terminus, the 194-residue chain is MPEIIGKLLKSDGKVVSEIEKQVSQALIDLETNDDVQSQLKELYIVGVKEVELGNKSAIIIYVPVPQLKAFHKIHPALVRELEKKFGGRDILILAKRRILPKPQRGSKARPQKQKRPRSRTLTAVHDAWLDELVYPAEVVGRRIRVKLDGKKVYKVHLDKSHQTNVGHKIGVFASVYRKLTGKDVTFEFPDPIF.

The protein belongs to the eukaryotic ribosomal protein eS7 family.

This is Small ribosomal subunit protein eS7 (rps-7) from Caenorhabditis elegans.